Here is a 702-residue protein sequence, read N- to C-terminus: MPRHGRRGKLPKGEKLPKKEGGDNTPSKLLSSMLKTLDLTFERDIGMLNGKSVRSIPNKKTLLELQSQLDSLNEILGTIARGDQETIEALRKIRDSKNEKQANDEKQETSNADGQHESSTATEETNIIDKGVQSPPKPPPSNEISGTIENDVESIKQAADNMAKEEINEDKDLQVHRDQPREKRPFDSETENRATENENTQRPDNKKQKIDVDKMENDPTVKNPKSEFVVSQTLPRAAAALGLFNEEGLESTGEDFLKKKYNVASYPTNDLKDLLPGELPDMDFSHPKPTNQIQFNTFLAFVENFFKDLSDDNLKFLKMKYIIPDSLQFDKTYDPEVNPFIIPKLGPLYTDVWFKDENDKNSAYKKPSPYSNDASTILPKKSANELDDNALESGSISCGPLLSRLLSAVLKDDNDKSELQSSKIIRDGGLPRTGGEDDIQSFRNNNNDTVDMTLSQENGPSVQTPDNDIDEEASFQAKLAENKGSNGGTTSTLPQQIGWITNGINLDYPTFEERLKRELKYVGIYMNLPKDENNPNSDDPDWVTGREDDEISAELRELQGTLKQVTKKNQKRKAQLIPLVERQLAWQEYSSILEDLDKQIDQAYVKRIRVPKKRKKHHTAASNNVNTGTTSQIAQQKAANSSLKSLLDKRQRWINKIGPLFDKPEIMKRIPNESVFKDMDQEEDEDEADVFAQNTNKDVELN.

A compositionally biased stretch (basic residues) spans 1–10 (MPRHGRRGKL). Disordered regions lie at residues 1-29 (MPRH…PSKL) and 90-224 (LRKI…VKNP). 2 stretches are compositionally biased toward basic and acidic residues: residues 11–22 (PKGEKLPKKEGG) and 90–108 (LRKI…EKQE). Over residues 109–125 (TSNADGQHESSTATEET) the composition is skewed to polar residues. At Ser134 the chain carries Phosphoserine. Over residues 162 to 219 (MAKEEINEDKDLQVHRDQPREKRPFDSETENRATENENTQRPDNKKQKIDVDKMENDP) the composition is skewed to basic and acidic residues. Ser407 is subject to Phosphoserine. At Thr464 the chain carries Phosphothreonine. Positions 606-618 (KRIRVPKKRKKHH) match the Nuclear localization signal motif. Disordered regions lie at residues 611–636 (PKKR…IAQQ) and 672–702 (NESV…VELN). Positions 620–636 (AASNNVNTGTTSQIAQQ) are enriched in polar residues. Residues 680–689 (DQEEDEDEAD) are compositionally biased toward acidic residues.

It belongs to the NGG1 family. Component of the 1.8 MDa SAGA (Spt-Ada-Gcn5 acetyltransferase) complex, which is composed of 19 subunits TRA1, SPT7, TAF5, NGG1/ADA3, SGF73, SPT20/ADA5, SPT8, TAF12, TAF6, HFI1/ADA1, UBP8, GCN5, ADA2, SPT3, SGF29, TAF10, TAF9, SGF11 and SUS1. The SAGA complex is composed of 4 modules, namely the HAT (histone acetyltransferase) module (GCN5, ADA2, NGG1/ADA3 and SGF29), the DUB (deubiquitinating) module (UBP8, SGF11, SGF73 and SUS1), the core or TAF (TBP-associated factor) module (TAF5, TAF6, TAF9, TAF10 and TAF12), and the Tra1 or SPT (Suppressor of Ty) module (TRA1, HFI1/ADA1, SPT3, SPT7, SPT8 and SPT20/ADA5). The Tra1/SPT module binds activators, the core module recruits TBP (TATA-binding protein), the HAT module contains the histone H3 acetyltransferase GCN5, and the DUB module comprises the histone H2B deubiquitinase UBP8. Also identified in an altered form of SAGA, named SALSA (SAGA altered, Spt8 absent) or SLIK (SAGA-like) complex, which contains a C-terminal truncated form of SPT7 and is missing SPT8. However, it has been shown that the SAGA and SAGA-like SALSA/SLIK transcriptional coactivators are structurally and biochemically equivalent. Component of the 0.8 MDa ADA complex, a HAT complex distinct from SAGA, which at least consists of ADA2, NGG1/ADA3, AHC1, AHC2, SGF29 and GCN5. Identified in an Ada.spt complex with SPT7 and TRA1. Component of an ADA/GCN5 complex that consists of HFI1/ADA1, ADA2, NGG1/ADA3, SPT20/ADA5 and GCN5 and probably is a subcomplex of SAGA.

It localises to the nucleus. Component of the transcription coactivator SAGA complex. SAGA acts as a general cofactor required for essentially all RNA polymerase II transcription. At the promoters, SAGA is required for transcription pre-initiation complex (PIC) recruitment. It influences RNA polymerase II transcriptional activity through different activities such as TBP interaction (via core/TAF module) and promoter selectivity, interaction with transcription activators (via Tra1/SPT module), and chromatin modification through histone acetylation (via HAT module) and deubiquitination (via DUB module). SAGA preferentially acetylates histones H3 (to form H3K9ac, H3K14ac, H3K18ac and H3K23ac) and H2B and deubiquitinates histone H2B. SAGA interacts with DNA via upstream activating sequences (UASs). Also identified in a modified version of SAGA named SALSA or SLIK. The cleavage of SPT7 and the absence of the SPT8 subunit in SLIK neither drive any major conformational differences in its structure compared with SAGA, nor significantly affect HAT, DUB, or DNA-binding activities. Component of the ADA histone acetyltransferase complex, which preferentially acetylates nucleosomal histones H3 (to form H3K14ac and H3K18ac) and H2B. May be involved in response to DNA damage by genotoxic agents. The protein is SAGA complex subunit NGG1 (NGG1) of Saccharomyces cerevisiae (strain ATCC 204508 / S288c) (Baker's yeast).